Consider the following 80-residue polypeptide: Adipogenin (80 aa).

A helical transmembrane segment spans residues 16–36; sequence FLVFWLCLPVALLLFLTIVWL. A Phosphoserine modification is found at serine 63.

It belongs to the adipogenin family. In terms of tissue distribution, selectively expressed in adipose tissue where it is particularly enriched in brown adipose tissue. In adipose tissue, expressed exclusively in adipocytes and not in the stromal-vascular cell population. Expressed at much lower levels in heart, stomach and muscle and barely detected in kidney and lung.

Its subcellular location is the membrane. It localises to the nucleus. In terms of biological role, plays a role in stimulating adipocyte differentiation and development. This chain is Adipogenin (Adig), found in Mus musculus (Mouse).